The primary structure comprises 744 residues: Prestin (744 aa).

Residues 1–75 (MDHAEENEIP…PITKWLPAYK (75 aa)) lie on the Cytoplasmic side of the membrane. The chain crosses the membrane as a helical span at residues 76 to 104 (FKEYVLGDLVSGISTGVLQLPQGLAFAML). The Extracellular segment spans residues 105-108 (AAVP). A helical transmembrane segment spans residues 109-126 (PVFGLYSSFYPVIMYCFF). At 127-137 (GTSRHISIGPF) the chain is on the cytoplasmic side. The chain crosses the membrane as a helical span at residues 138–149 (AVISLMIGGVAV). The Extracellular portion of the chain corresponds to 150–168 (RLVPDDIVIPGGVNATNGT). Positions 158–168 (IPGGVNATNGT) match the Involved in motor function motif. N-linked (GlcNAc...) asparagine glycans are attached at residues Asn-163 and Asn-166. Residues 169–196 (EARDALRVKVAMSVTLLSGIIQFCLGVC) traverse the membrane as a helical segment. Over 197-206 (RFGFVAIYLT) the chain is Cytoplasmic. A helical transmembrane segment spans residues 207 to 230 (EPLVRGFTTAAAVHVFTSMLKYLF). The Extracellular segment spans residues 231-241 (GVKTKRYSGIF). Positions 242–253 (SVVYSTVAVLQN) form an intramembrane region, helical. At 254–258 (VKNLN) the chain is on the extracellular side. A helical membrane pass occupies residues 259–276 (VCSLGVGLMVFGLLLGGK). At 277–291 (EFNERFKEKLPAPIP) the chain is on the cytoplasmic side. The helical transmembrane segment at 292–307 (LEFFAVVMGTGISAGF) threads the bilayer. Topologically, residues 308 to 332 (NLHESYSVDVVGTLPLGLLPPANPD) are extracellular. The chain crosses the membrane as a helical span at residues 333 to 359 (TSLFHLVYVDAIAIAIVGFSVTISMAK). Residues 360–370 (TLANKHGYQVD) lie on the Cytoplasmic side of the membrane. The chain crosses the membrane as a helical span at residues 371-388 (GNQELIALGICNSIGSLF). Over 389 to 396 (QTFSISCS) the chain is Extracellular. Residues 397–406 (LSRSLVQEGT) traverse the membrane as a helical segment. Ser-398 is a salicylate binding site. Residues 407–410 (GGKT) lie on the Cytoplasmic side of the membrane. The helical transmembrane segment at 411 to 431 (QLAGCLASLMILLVILATGFL) threads the bilayer. Topologically, residues 432–436 (FESLP) are extracellular. The helical transmembrane segment at 437 to 464 (QAVLSAIVIVNLKGMFMQFSDLPFFWRT) threads the bilayer. Residue Ser-465 is a topological domain, cytoplasmic. Residues 466-481 (KIELTIWLTTFVSSLF) form a helical membrane-spanning segment. Topologically, residues 482 to 484 (LGL) are extracellular. The chain crosses the membrane as a helical span at residues 485 to 504 (DYGLITAVIIALLTVIYRTQ). Positions 505-718 (SPSYTVLGQL…AVLGSQVREA (214 aa)) are extended region for STAS domain. At 505 to 744 (SPSYTVLGQL…PNATPTTPEA (240 aa)) the chain is on the cytoplasmic side. Positions 525-713 (AYEEVKEIPG…HSIHDAVLGS (189 aa)) constitute an STAS domain. A disordered region spans residues 720–744 (AEQETTVLPPQEDMEPNATPTTPEA).

This sequence belongs to the SLC26A/SulP transporter (TC 2.A.53) family. As to quaternary structure, homodimer. Interacts (via STAS domain) with CALM; this interaction is calcium-dependent and the STAS domain interacts with only one lobe of CALM which is an elongated conformation. Interacts with MYH1. In terms of tissue distribution, specifically expressed in outer hair cells of cochleae (at protein level). Not detected in other cells of the organ of Corti.

It localises to the lateral cell membrane. It carries out the reaction 2 hydrogencarbonate(in) + chloride(out) = 2 hydrogencarbonate(out) + chloride(in). Its activity is regulated as follows. Salicylate, an inhibitor of outer hair cell motility, acts as a competitive antagonist at the prestin anion-binding site. Its function is as follows. Voltage-sensitive motor protein that drives outer hair cell (OHC) electromotility (eM) and participates in sound amplification in the hearing organ. Converts changes in the transmembrane electric potential into mechanical displacements resulting in the coupling of its expansion to movement of a charged voltage sensor across the lipid membrane. The nature of the voltage sensor is not completely clear, and two models compete. In the first model, acts as an incomplete transporter where intracellular chloride anion acts as extrinsic voltage sensor that drives conformational change in the protein which is sufficient to produce a length change in the plane of the membrane and hence in the length of the OHC. The second model in which multiple charged amino acid residues are distributed at the intracellular and extracellular membrane interfaces that form an intrinsic voltage sensor, whose movement produces the non-linear capacitance (NLC). However, the effective voltage sensor may be the result of a hybrid voltage sensor assembled from intrinsic charge (charged residues) and extrinsic charge (bound anion). Notably, binding of anions to the anion-binding pocket partially neutralizes the intrinsic positive charge rather than to form an electrically negative sensor, therefore remaining charge may serve as voltage sensor that, after depolarization, moves from down (expanded state) to up (contracted) conformation, which is accompanied by an eccentric contraction of the intermembrane cross-sectional area of the protein as well as a major increase in the hydrophobic thickness of the protein having as consequences the plasma membrane thickening and the cell contraction after membrane depolarization. The anion-binding pocket transits from the inward-open (Down) state, where it is exposed toward the intracellular solvent in the absence of anion, to the occluded (Up) state upon anion binding. Salicylate competes for the anion-binding site and inhibits the voltage-sensor movement, and therefore inhibits the charge transfer and electromotility by displacing Cl(-) from the anion-binding site and by preventing the structural transitions to the contracted state. In addition, can act as a weak Cl(-)/HCO3(-) antiporter across the cell membrane and so regulate the intracellular pH of the outer hair cells (OHCs), while firstly found as being unable to mediate electrogenic anion transport. Moreover, supports a role in cardiac mechanical amplification serving as an elastic element to enhance the actomyosin- based sarcomere contraction system. The polypeptide is Prestin (Rattus norvegicus (Rat)).